Consider the following 789-residue polypeptide: Disintegrin and metalloproteinase domain-containing protein 1 (789 aa).

Residues 1–68 form the signal peptide; the sequence is MSVAASASRS…LLIFLPSTLC (68 aa). A Peptidase M12B domain is found at 238 to 432; the sequence is KYVEMFVVVN…HRGACLLDRP (195 aa). Asn259 carries N-linked (GlcNAc...) asparagine glycosylation. 4 cysteine pairs are disulfide-bonded: Cys348-Cys427, Cys388-Cys411, Cys390-Cys396, and Cys497-Cys517. His373 is a Zn(2+) binding site. Glu374 is an active-site residue. Residues His377 and His383 each coordinate Zn(2+). A glycan (N-linked (GlcNAc...) asparagine) is linked at Asn410. A Disintegrin domain is found at 441–525; that stretch reads DAHCGNGVVE…ECPANSYMQD (85 aa). Asn633 carries N-linked (GlcNAc...) asparagine glycosylation. The EGF-like domain maps to 666–700; sequence LQYDCHPQEMCHGNGVCNNFKHCHCDAGFSPPDCS. Disulfide bonds link Cys670–Cys682, Cys676–Cys688, and Cys690–Cys699. Asn720 carries N-linked (GlcNAc...) asparagine glycosylation. The chain crosses the membrane as a helical span at residues 743-763; the sequence is VVVLVVPIFLIVLLCCLMLIA. The Cytoplasmic segment spans residues 764–789; it reads YLWSEVQEAVSPGSSSTTSSSESESD.

Heterodimer with ADAM2/fertilin subunit beta.

It localises to the membrane. Functionally, may be involved in sperm-egg fusion. This Rattus norvegicus (Rat) protein is Disintegrin and metalloproteinase domain-containing protein 1 (Adam1).